The following is a 223-amino-acid chain: Transcriptional regulatory protein PhoP (223 aa).

Residues 2-116 enclose the Response regulatory domain; sequence RVLVVEDNAL…EVMARMQALM (115 aa). The residue at position 51 (aspartate 51) is a 4-aspartylphosphate. Residues 124–222 constitute a DNA-binding region (ompR/PhoB-type); that stretch reads SQVISLPPFQ…VRGQGYLFEL (99 aa).

Monomer in the inactive, unphosphorylated state and dimer in the active, phosphorylated state. Post-translationally, phosphorylated by PhoQ.

It is found in the cytoplasm. With respect to regulation, feedback inhibited by MgrB, which seems to bind PhoQ, altering its activity and that of downstream effector PhoP. PhoP-regulated transcription is redox-sensitive, being activated when the periplasm becomes more reducing (deletion of dsbA/dsbB, or treatment with dithiothreitol). MgrB acts between DsbA/DsbB and PhoP/PhoQ in this pathway. Member of the two-component regulatory system PhoP/PhoQ involved in adaptation to low Mg(2+) environments and the control of acid resistance genes. In low periplasmic Mg(2+), PhoQ phosphorylates PhoP, resulting in the expression of PhoP-activated genes (PAG) and repression of PhoP-repressed genes (PRG). In high periplasmic Mg(2+), PhoQ dephosphorylates phospho-PhoP, resulting in the repression of PAG and may lead to expression of some PRG. Mediates magnesium influx to the cytosol by activation of MgtA. Promotes expression of the two-component regulatory system rstA/rstB and transcription of the hemL, mgrB, nagA, slyB, vboR and yrbL genes. The sequence is that of Transcriptional regulatory protein PhoP (phoP) from Escherichia coli (strain K12).